A 176-amino-acid polypeptide reads, in one-letter code: Disulfide bond formation protein B (176 aa).

Topologically, residues Met-1–Ala-14 are cytoplasmic. The helical transmembrane segment at Trp-15 to Trp-31 threads the bilayer. Residues Phe-32–Cys-49 lie on the Periplasmic side of the membrane. Cys-41 and Cys-44 are joined by a disulfide. A helical membrane pass occupies residues Ala-50–Pro-65. At Lys-66 to Tyr-71 the chain is on the cytoplasmic side. The helical transmembrane segment at Val-72–Tyr-89 threads the bilayer. The Periplasmic segment spans residues Glu-90–Gln-144. A disulfide bond links Cys-104 and Cys-130. Residues Trp-145 to Ser-163 traverse the membrane as a helical segment. Residues Gln-164–Arg-176 are Cytoplasmic-facing.

The protein belongs to the DsbB family.

It localises to the cell inner membrane. In terms of biological role, required for disulfide bond formation in some periplasmic proteins. Acts by oxidizing the DsbA protein. The chain is Disulfide bond formation protein B from Escherichia coli O1:K1 / APEC.